Consider the following 406-residue polypeptide: Endo-xylogalacturonan hydrolase A (406 aa).

Positions 1 to 18 are cleaved as a signal peptide; sequence MALYRNLYLLASLGLSSA. PbH1 repeat units follow at residues 183 to 213, 214 to 257, 266 to 289, 299 to 320, and 333 to 375; these read ATNV…DIGE, STYV…SVGS, VKNI…KTYP, VSNV…QIQS, and PGNA…SISG. The Proton donor role is filled by aspartate 228. Residue histidine 251 is part of the active site. Residues asparagine 278 and asparagine 301 are each glycosylated (N-linked (GlcNAc...) asparagine).

The protein belongs to the glycosyl hydrolase 28 family.

The protein localises to the secreted. Pectinolytic enzyme involved in the degradation of xylogalacturonan (xga), a galacturonan backbone heavily substituted with xylose, and which is one important component of the hairy regions of pectin. Activity requires a galacturonic acid backbone substituted with xylose. The sequence is that of Endo-xylogalacturonan hydrolase A (xghA) from Aspergillus tubingensis.